Here is a 348-residue protein sequence, read N- to C-terminus: Flagellar P-ring protein (348 aa).

The first 24 residues, 1–24 (MRRKNNNKIWIWVATLILSISALY), serve as a signal peptide directing secretion.

It belongs to the FlgI family. In terms of assembly, the basal body constitutes a major portion of the flagellar organelle and consists of four rings (L,P,S, and M) mounted on a central rod.

It localises to the periplasm. The protein localises to the bacterial flagellum basal body. Its function is as follows. Assembles around the rod to form the L-ring and probably protects the motor/basal body from shearing forces during rotation. The polypeptide is Flagellar P-ring protein (Helicobacter hepaticus (strain ATCC 51449 / 3B1)).